The primary structure comprises 315 residues: Cytochrome c biogenesis protein CcsA (315 aa).

A run of 7 helical transmembrane segments spans residues 14–34 (VVSL…ISFW), 72–92 (ISNL…AQLF), 101–121 (IVSA…SFVL), 146–166 (VIMC…GVFL), 221–241 (SITA…VWAN), 255–272 (TWAL…HTRL), and 282–302 (AILA…VNLL).

The protein belongs to the CcmF/CycK/Ccl1/NrfE/CcsA family. As to quaternary structure, may interact with ccs1.

Its subcellular location is the cellular thylakoid membrane. Its function is as follows. Required during biogenesis of c-type cytochromes (cytochrome c6 and cytochrome f) at the step of heme attachment. The chain is Cytochrome c biogenesis protein CcsA from Prochlorococcus marinus (strain NATL1A).